Reading from the N-terminus, the 702-residue chain is Solute carrier organic anion transporter family member 1B3 (702 aa).

Residues 1-28 (MDQHQHLNKTAESASSEKKKTRRCNGFK) lie on the Cytoplasmic side of the membrane. Residues 29-48 (MFLAALSFSYIAKALGGIIM) form a helical membrane-spanning segment. Residues 49 to 67 (KISITQIERRFDISSSLAG) are Extracellular-facing. The helical transmembrane segment at 68–88 (LIDGSFEIGNLLVIVFVSYFG) threads the bilayer. Residues 89–94 (SKLHRP) lie on the Cytoplasmic side of the membrane. A helical membrane pass occupies residues 95–119 (KLIGIGCLLMGTGSILTSLPHFFMG). Topologically, residues 120-168 (YYRYSKETHINPSENSTSSLSTCLINQTLSFNGTSPEIVEKDCVKESGS) are extracellular. 3 N-linked (GlcNAc...) asparagine glycosylation sites follow: asparagine 134, asparagine 145, and asparagine 151. Residues 169–197 (HMWIYVFMGNMLRGIGETPIVPLGISYID) traverse the membrane as a helical segment. Residues 198–216 (DFAKEGHSSLYLGSLNAIG) lie on the Cytoplasmic side of the membrane. Residues 217 to 237 (MIGPVIGFALGSLFAKMYVDI) traverse the membrane as a helical segment. Residues 238–255 (GYVDLSTIRITPKDSRWV) are Extracellular-facing. A helical membrane pass occupies residues 256–280 (GAWWLGFLVSGLFSIISSIPFFFLP). The Cytoplasmic portion of the chain corresponds to 281–331 (KNPNKPQKERKISLSLHVLKTNDDRNQTANLTNQGKNVTKNVTGFFQSLKS). Serine 293 and serine 295 each carry phosphoserine. A helical membrane pass occupies residues 332–353 (ILTNPLYVIFLLLTLLQVSSFI). Over 354–373 (GSFTYVFKYMEQQYGQSASH) the chain is Extracellular. A helical membrane pass occupies residues 374-397 (ANFLLGIITIPTVATGMFLGGFII). Topologically, residues 398–401 (KKFK) are cytoplasmic. The chain crosses the membrane as a helical span at residues 402 to 425 (LSLVGIAKFSFLTSMISFLFQLLY). Over 426–537 (FPLICESKSV…NTCTRKFFIY (112 aa)) the chain is Extracellular. An N-linked (GlcNAc...) asparagine glycan is attached at asparagine 445. Positions 453-508 (DVPLSYCNSECNCDESQWEPVCGNNGITYLSPCLAGCKSSSGIKKHTVFYNCSCVE) constitute a Kazal-like domain. Cystine bridges form between cysteine 459/cysteine 489, cysteine 465/cysteine 485, and cysteine 474/cysteine 506. 2 N-linked (GlcNAc...) asparagine glycosylation sites follow: asparagine 503 and asparagine 516. The helical transmembrane segment at 538–560 (VAIQVINSLFSATGGTTFILLTV) threads the bilayer. Over 561–569 (KIVQPELKA) the chain is Cytoplasmic. Residues 570–595 (LAMGFQSMVIRTLGGILAPIYFGALI) form a helical membrane-spanning segment. The Extracellular segment spans residues 596–629 (DKTCMKWSTNSCGAQGACRIYNSVFFGRVYLGLS). Residues 630–647 (IALRFPALVLYIVFIFAM) traverse the membrane as a helical segment. Over 648–695 (KKKFQGKDTKASDNERKVMDEANLEFLNNGEHFVPSAGTDSKTCNLDM) the chain is Cytoplasmic. A Phosphoserine modification is found at serine 683.

The protein belongs to the organo anion transporter (TC 2.A.60) family. In terms of processing, N-glycosylated. In terms of tissue distribution, highly expressed in liver, in particular at the basolateral membrane of hepatocytes near the central vein. Expressed in the placenta. In testis, primarily localized to the basal membrane of Sertoli cells and weakly expressed in Leydig cells and within the tubules.

The protein resides in the basolateral cell membrane. The protein localises to the basal cell membrane. The enzyme catalyses estrone 3-sulfate(out) + hydrogencarbonate(in) = estrone 3-sulfate(in) + hydrogencarbonate(out). The catalysed reaction is 17beta-estradiol 17-O-(beta-D-glucuronate)(out) = 17beta-estradiol 17-O-(beta-D-glucuronate)(in). It catalyses the reaction taurocholate(out) = taurocholate(in). It carries out the reaction estrone 3-sulfate(out) = estrone 3-sulfate(in). The enzyme catalyses dehydroepiandrosterone 3-sulfate(out) = dehydroepiandrosterone 3-sulfate(in). The catalysed reaction is leukotriene C4(out) = leukotriene C4(in). It catalyses the reaction L-thyroxine(out) = L-thyroxine(in). It carries out the reaction prostaglandin E2(out) = prostaglandin E2(in). The enzyme catalyses (4E,15E)-bilirubin IXalpha C8-beta-D-glucuronoside(out) = (4E,15E)-bilirubin IXalpha C8-beta-D-glucuronoside(in). The catalysed reaction is bilirubin IXalpha bis-beta-D-glucuronoside(out) = bilirubin IXalpha bis-beta-D-glucuronoside(in). Mediates the Na(+)-independent uptake of organic anions. Shows broad substrate specificity, can transport both organic anions such as bile acid taurocholate (cholyltaurine) and conjugated steroids (17-beta-glucuronosyl estradiol, dehydroepiandrosterone sulfate (DHEAS), and estrone 3-sulfate), as well as eicosanoid leukotriene C4, prostaglandin E2 and L-thyroxine (T4). Hydrogencarbonate/HCO3(-) acts as the probable counteranion that exchanges for organic anions. Shows a pH-sensitive substrate specificity towards sulfated steroids, taurocholate and T4 which may be ascribed to the protonation state of the binding site and leads to a stimulation of substrate transport in an acidic microenvironment. Involved in the clearance of bile acids and organic anions from the liver. Can take up bilirubin glucuronides from plasma into the liver, contributing to the detoxification-enhancing liver-blood shuttling loop. Transports coproporphyrin I and III, by-products of heme synthesis, and may be involved in their hepatic disposition. May contribute to regulate the transport of organic compounds in testes across the blood-testis-barrier. Can transport HMG-CoA reductase inhibitors (also known as statins) such as pitavastatin, a clinically important class of hypolipidemic drugs. May play an important role in plasma and tissue distribution of the structurally diverse chemotherapeutic drugs methotrexate and paclitaxel. May also transport antihypertension agents, such as the angiotensin-converting enzyme (ACE) inhibitor prodrug enalapril, and the highly selective angiotensin II AT1-receptor antagonist valsartan, in the liver. This is Solute carrier organic anion transporter family member 1B3 (SLCO1B3) from Homo sapiens (Human).